We begin with the raw amino-acid sequence, 447 residues long: N-succinylarginine dihydrolase (447 aa).

Residues 19-28 (AGLSFGNEAS), Asn110, and 137-138 (HR) each bind substrate. Glu174 is a catalytic residue. Arg212 is a binding site for substrate. His248 is an active-site residue. The substrate site is built by Asp250 and Asn359. Residue Cys365 is the Nucleophile of the active site.

It belongs to the succinylarginine dihydrolase family. Homodimer.

The enzyme catalyses N(2)-succinyl-L-arginine + 2 H2O + 2 H(+) = N(2)-succinyl-L-ornithine + 2 NH4(+) + CO2. It participates in amino-acid degradation; L-arginine degradation via AST pathway; L-glutamate and succinate from L-arginine: step 2/5. In terms of biological role, catalyzes the hydrolysis of N(2)-succinylarginine into N(2)-succinylornithine, ammonia and CO(2). The polypeptide is N-succinylarginine dihydrolase (Escherichia coli O7:K1 (strain IAI39 / ExPEC)).